The following is a 209-amino-acid chain: Large ribosomal subunit protein uL3 (209 aa).

Positions 128 to 166 (FGGGSRTHGQSDRLRAPGSVGGSSDPSRTFKGTRMAGRM) are disordered.

This sequence belongs to the universal ribosomal protein uL3 family. Part of the 50S ribosomal subunit. Forms a cluster with proteins L14 and L19.

Its function is as follows. One of the primary rRNA binding proteins, it binds directly near the 3'-end of the 23S rRNA, where it nucleates assembly of the 50S subunit. The sequence is that of Large ribosomal subunit protein uL3 from Chlorobaculum parvum (strain DSM 263 / NCIMB 8327) (Chlorobium vibrioforme subsp. thiosulfatophilum).